We begin with the raw amino-acid sequence, 550 residues long: Aspartate--tRNA ligase (550 aa).

An L-aspartate-binding site is contributed by Glu162. The segment at 186–189 (QIYK) is aspartate. Residue Arg208 participates in L-aspartate binding. ATP is bound by residues 208 to 210 (RDE) and Gln217. Position 417 (His417) interacts with L-aspartate. Glu451 contacts ATP. Arg458 contacts L-aspartate. Residue 499–502 (GIDR) participates in ATP binding.

This sequence belongs to the class-II aminoacyl-tRNA synthetase family. Type 1 subfamily. In terms of assembly, homodimer.

Its subcellular location is the cytoplasm. It catalyses the reaction tRNA(Asp) + L-aspartate + ATP = L-aspartyl-tRNA(Asp) + AMP + diphosphate. Its function is as follows. Catalyzes the attachment of L-aspartate to tRNA(Asp) in a two-step reaction: L-aspartate is first activated by ATP to form Asp-AMP and then transferred to the acceptor end of tRNA(Asp). The sequence is that of Aspartate--tRNA ligase from Mycoplasma genitalium (strain ATCC 33530 / DSM 19775 / NCTC 10195 / G37) (Mycoplasmoides genitalium).